The primary structure comprises 278 residues: MTVLHSVDFFPSGNASVAIEPRLPQADFPEHHHDFHEIVIVEHGTGIHVFNGQPYTITGGTVCFVRDHDRHLYEHTDNLCLTNVLYRSPDRFQFLAGLNQLLPQELDGQYPSHWRVNHSVLQQVRQLVAQMEQQEGENDLPSTASREILFMQLLLLLRKSSLQENLENSASRLNLLLAWLEDHFADEVNWDAVADQFSLSLRTLHRQLKQQTGLTPQRYLNRLRLMKARHLLRHSEASVTDIAYRCGFSDSNHFSTLFRREFNWSPRDIRQGRDGFLQ.

One can recognise an HTH araC/xylS-type domain in the interval 174–272 (NLLLAWLEDH…NWSPRDIRQG (99 aa)). 2 DNA-binding regions (H-T-H motif) span residues 191–212 (DAVADQFSLSLRTLHRQLKQQT) and 239–262 (VTDIAYRCGFSDSNHFSTLFRREF).

In terms of assembly, binds DNA as a dimer.

Its subcellular location is the cytoplasm. In terms of biological role, activates expression of the rhaBAD and rhaT operons. This Shigella boydii serotype 4 (strain Sb227) protein is HTH-type transcriptional activator RhaS.